Consider the following 101-residue polypeptide: Secreted RxLR effector protein 64 (101 aa).

An N-terminal signal peptide occupies residues 1–23 (MMSPPMTTTLMFILNYAIISFHG). The RxLR motif lies at 48–51 (RELR). A helical transmembrane segment spans residues 67–87 (LQPILPLPLCLPFPLVPASIF).

Belongs to the RxLR effector family.

The protein resides in the secreted. It is found in the host cytoplasm. The protein localises to the host nucleus. It localises to the membrane. Its function is as follows. Effector that acts as a broad suppressor of cell death to interrupt plant immunity. Inhibits cell death induced by cell death-inducing proteins, including the PAMP elicitor INF1 from P.infestans. The sequence is that of Secreted RxLR effector protein 64 from Plasmopara viticola (Downy mildew of grapevine).